The sequence spans 229 residues: Large ribosomal subunit protein uL1 (229 aa).

Belongs to the universal ribosomal protein uL1 family. Part of the 50S ribosomal subunit.

Binds directly to 23S rRNA. The L1 stalk is quite mobile in the ribosome, and is involved in E site tRNA release. In terms of biological role, protein L1 is also a translational repressor protein, it controls the translation of the L11 operon by binding to its mRNA. This Lactococcus lactis subsp. lactis (strain IL1403) (Streptococcus lactis) protein is Large ribosomal subunit protein uL1.